We begin with the raw amino-acid sequence, 428 residues long: Serine--tRNA ligase (428 aa).

Residue 235 to 237 (TAE) participates in L-serine binding. 266–268 (RSE) is an ATP binding site. Glu-289 provides a ligand contact to L-serine. 353–356 (EISS) provides a ligand contact to ATP. Ser-389 is a binding site for L-serine.

It belongs to the class-II aminoacyl-tRNA synthetase family. Type-1 seryl-tRNA synthetase subfamily. In terms of assembly, homodimer. The tRNA molecule binds across the dimer.

The protein resides in the cytoplasm. It catalyses the reaction tRNA(Ser) + L-serine + ATP = L-seryl-tRNA(Ser) + AMP + diphosphate + H(+). It carries out the reaction tRNA(Sec) + L-serine + ATP = L-seryl-tRNA(Sec) + AMP + diphosphate + H(+). It functions in the pathway aminoacyl-tRNA biosynthesis; selenocysteinyl-tRNA(Sec) biosynthesis; L-seryl-tRNA(Sec) from L-serine and tRNA(Sec): step 1/1. Functionally, catalyzes the attachment of serine to tRNA(Ser). Is also able to aminoacylate tRNA(Sec) with serine, to form the misacylated tRNA L-seryl-tRNA(Sec), which will be further converted into selenocysteinyl-tRNA(Sec). The protein is Serine--tRNA ligase of Shewanella oneidensis (strain ATCC 700550 / JCM 31522 / CIP 106686 / LMG 19005 / NCIMB 14063 / MR-1).